A 362-amino-acid polypeptide reads, in one-letter code: Fructose-bisphosphate aldolase (362 aa).

Residue Ser63 coordinates D-glyceraldehyde 3-phosphate. Asp112 (proton donor) is an active-site residue. Zn(2+) contacts are provided by His113, Asp147, Glu177, and His229. Position 230 (Gly230) interacts with dihydroxyacetone phosphate. His268 contacts Zn(2+). Dihydroxyacetone phosphate contacts are provided by residues 269–271 (GGS) and 290–293 (NVDT).

The protein belongs to the class II fructose-bisphosphate aldolase family. In terms of assembly, homodimer. Zn(2+) serves as cofactor.

The enzyme catalyses beta-D-fructose 1,6-bisphosphate = D-glyceraldehyde 3-phosphate + dihydroxyacetone phosphate. It functions in the pathway carbohydrate degradation; glycolysis; D-glyceraldehyde 3-phosphate and glycerone phosphate from D-glucose: step 4/4. Functionally, catalyzes the aldol condensation of dihydroxyacetone phosphate (DHAP or glycerone-phosphate) with glyceraldehyde 3-phosphate (G3P) to form fructose 1,6-bisphosphate (FBP) in gluconeogenesis and the reverse reaction in glycolysis. The protein is Fructose-bisphosphate aldolase (fba) of Neurospora crassa (strain ATCC 24698 / 74-OR23-1A / CBS 708.71 / DSM 1257 / FGSC 987).